The chain runs to 314 residues: MLHTRIRRATLGAVAALSLVPVMACGQESSADAAEPAGSAPSSSAAAHKPGEVEPYAAELKALEDEFDVRLGVYAVDTGSGREVAYRDGERFPYNSTFKALECGAVLDKHTDREMDRVVKYSEDDLVDNSPVTEKHVEDGMTLTALCDAAVRYSDNTAANLLFETVGGPKGLDKTLEGLGDHVTRMERVEPFLSRWEPGSKRDTSTPRAFAKDLRAYVLGDVLAEGDRKQLTTWLRNNTTGDGLIRAGVRQGWVVGDKTGTGSYYGARNDMAVVWRPDGRPLVLNVMVHGHTKDAELDSELIARATEVVADRLG.

The N-terminal stretch at 1–26 is a signal peptide; that stretch reads MLHTRIRRATLGAVAALSLVPVMACG. Over residues 32 to 47 the composition is skewed to low complexity; sequence DAAEPAGSAPSSSAAA. Residues 32-51 are disordered; that stretch reads DAAEPAGSAPSSSAAAHKPG. The active-site Acyl-ester intermediate is the serine 96. 258–260 lines the substrate pocket; that stretch reads KTG.

Belongs to the class-A beta-lactamase family.

The catalysed reaction is a beta-lactam + H2O = a substituted beta-amino acid. In Streptomyces cacaoi, this protein is Beta-lactamase 2 (blaU).